The following is a 517-amino-acid chain: Crotonobetaine/carnitine--CoA ligase (517 aa).

It belongs to the ATP-dependent AMP-binding enzyme family.

It catalyses the reaction 4-(trimethylamino)butanoate + ATP + CoA = 4-(trimethylamino)butanoyl-CoA + AMP + diphosphate. The catalysed reaction is crotonobetaine + ATP + CoA = crotonobetainyl-CoA + AMP + diphosphate. It carries out the reaction (R)-carnitine + ATP + CoA = (R)-carnitinyl-CoA + AMP + diphosphate. It participates in amine and polyamine metabolism; carnitine metabolism. Catalyzes the transfer of CoA to carnitine, generating the initial carnitinyl-CoA needed for the CaiB reaction cycle. Also has activity toward crotonobetaine and gamma-butyrobetaine. This is Crotonobetaine/carnitine--CoA ligase from Escherichia fergusonii (strain ATCC 35469 / DSM 13698 / CCUG 18766 / IAM 14443 / JCM 21226 / LMG 7866 / NBRC 102419 / NCTC 12128 / CDC 0568-73).